We begin with the raw amino-acid sequence, 64 residues long: UPF0434 protein BOV_A0835 (64 aa).

It belongs to the UPF0434 family.

The protein is UPF0434 protein BOV_A0835 of Brucella ovis (strain ATCC 25840 / 63/290 / NCTC 10512).